Here is a 141-residue protein sequence, read N- to C-terminus: Hemoglobin subunit alpha (141 aa).

In terms of domain architecture, Globin spans 1-141; it reads VLSAEDKANV…VSTVLTSKYR (141 aa). S3 carries the post-translational modification Phosphoserine. An N6-succinyllysine mark is found at K7 and K11. Position 16 is an N6-acetyllysine; alternate (K16). K16 is modified (N6-succinyllysine; alternate). Y24 is modified (phosphotyrosine). S35 bears the Phosphoserine mark. At K40 the chain carries N6-succinyllysine. S49 carries the post-translational modification Phosphoserine. H58 provides a ligand contact to O2. Residue H87 participates in heme b binding. Position 102 is a phosphoserine (S102). T108 bears the Phosphothreonine mark. Phosphoserine occurs at positions 124 and 131. Residues T134 and T137 each carry the phosphothreonine modification. Residue S138 is modified to Phosphoserine.

Belongs to the globin family. In terms of assembly, heterotetramer of two alpha chains and two beta chains. Red blood cells.

Its function is as follows. Involved in oxygen transport from the lung to the various peripheral tissues. This chain is Hemoglobin subunit alpha, found in Peromyscus crinitus (Canyon mouse).